Consider the following 65-residue polypeptide: Cecropin (65 aa).

An N-terminal signal peptide occupies residues 1 to 23 (MNFVKVLFFISACILIMLSAVSG).

The protein belongs to the cecropin family.

It localises to the secreted. Functionally, has antibacterial activity. The protein is Cecropin (LOC113514368) of Galleria mellonella (Greater wax moth).